We begin with the raw amino-acid sequence, 185 residues long: Ovomucoid (185 aa).

Kazal-like domains are found at residues 1–63 (VEVD…ECRE), 64–128 (AVPM…ECRK), and 131–185 (AAVS…FGKC). Intrachain disulfides connect Cys5-Cys43, Cys22-Cys40, Cys30-Cys61, Cys69-Cys108, Cys86-Cys105, Cys94-Cys126, Cys137-Cys167, Cys145-Cys164, and Cys153-Cys185. N-linked (GlcNAc...) asparagine glycosylation is present at Asn174.

The protein resides in the secreted. The protein is Ovomucoid of Meleagris gallopavo (Wild turkey).